The primary structure comprises 184 residues: ATP synthase subunit delta (184 aa).

The protein belongs to the ATPase delta chain family. In terms of assembly, F-type ATPases have 2 components, F(1) - the catalytic core - and F(0) - the membrane proton channel. F(1) has five subunits: alpha(3), beta(3), gamma(1), delta(1), epsilon(1). F(0) has three main subunits: a(1), b(2) and c(10-14). The alpha and beta chains form an alternating ring which encloses part of the gamma chain. F(1) is attached to F(0) by a central stalk formed by the gamma and epsilon chains, while a peripheral stalk is formed by the delta and b chains.

Its subcellular location is the cell membrane. Its function is as follows. F(1)F(0) ATP synthase produces ATP from ADP in the presence of a proton or sodium gradient. F-type ATPases consist of two structural domains, F(1) containing the extramembraneous catalytic core and F(0) containing the membrane proton channel, linked together by a central stalk and a peripheral stalk. During catalysis, ATP synthesis in the catalytic domain of F(1) is coupled via a rotary mechanism of the central stalk subunits to proton translocation. In terms of biological role, this protein is part of the stalk that links CF(0) to CF(1). It either transmits conformational changes from CF(0) to CF(1) or is implicated in proton conduction. The polypeptide is ATP synthase subunit delta (Bacillus licheniformis (strain ATCC 14580 / DSM 13 / JCM 2505 / CCUG 7422 / NBRC 12200 / NCIMB 9375 / NCTC 10341 / NRRL NRS-1264 / Gibson 46)).